Consider the following 74-residue polypeptide: MAVFEKVQEIIVEELGKDASEVTLESTFDDLDADSLDLFQVISEIEDAFDIQIEAENDLKTVGDLVAYVEEQAK.

The 73-residue stretch at 1–73 (MAVFEKVQEI…DLVAYVEEQA (73 aa)) folds into the Carrier domain. The residue at position 35 (serine 35) is an O-(pantetheine 4'-phosphoryl)serine.

It belongs to the acyl carrier protein (ACP) family. In terms of processing, 4'-phosphopantetheine is transferred from CoA to a specific serine of apo-ACP by AcpS. This modification is essential for activity because fatty acids are bound in thioester linkage to the sulfhydryl of the prosthetic group.

It is found in the cytoplasm. Its pathway is lipid metabolism; fatty acid biosynthesis. Its function is as follows. Carrier of the growing fatty acid chain in fatty acid biosynthesis. This Streptococcus pneumoniae serotype 4 (strain ATCC BAA-334 / TIGR4) protein is Acyl carrier protein.